Consider the following 393-residue polypeptide: S-adenosylmethionine synthase (393 aa).

H16 contributes to the ATP binding site. A Mg(2+)-binding site is contributed by D18. E44 provides a ligand contact to K(+). L-methionine is bound by residues E57 and Q100. Positions Q100–H110 are flexible loop. ATP contacts are provided by residues D167 to K169, R238 to F239, D247, R253 to K254, A270, and K274. D247 contacts L-methionine. Residue K278 participates in L-methionine binding.

It belongs to the AdoMet synthase family. Homotetramer; dimer of dimers. Mg(2+) serves as cofactor. Requires K(+) as cofactor.

It is found in the cytoplasm. It catalyses the reaction L-methionine + ATP + H2O = S-adenosyl-L-methionine + phosphate + diphosphate. It functions in the pathway amino-acid biosynthesis; S-adenosyl-L-methionine biosynthesis; S-adenosyl-L-methionine from L-methionine: step 1/1. Catalyzes the formation of S-adenosylmethionine (AdoMet) from methionine and ATP. The overall synthetic reaction is composed of two sequential steps, AdoMet formation and the subsequent tripolyphosphate hydrolysis which occurs prior to release of AdoMet from the enzyme. The polypeptide is S-adenosylmethionine synthase (Leptothrix cholodnii (strain ATCC 51168 / LMG 8142 / SP-6) (Leptothrix discophora (strain SP-6))).